We begin with the raw amino-acid sequence, 412 residues long: MEMRGKITKINENGLGVLGNILVPFAYPGDEVEVTETRERFGKIIARDFKLMTPSPLRIPGKCSHFGKCGGCLWQGLRYREQLKLKEEIFKRITGIEAEIKGSPRIWYFRNISNFIITVNGIGFKEFGMPKTVVNIRECPIFSERTPKYLKALKDFLRESNLKPWNWREGDVHYLQVREGKFTGEVMVNIIAHVPLNYREALMEAFNFADSIYWSLKADKKDDPRGFPTLVLGNEVIREKVEGITYLIHPSVFFQTNSYALPLLLKSVEKFCEGSKVLDLYSGIGTLSLYLAKRGFEVTGVEVNGTSVEMAKRSAEINSINATFIQGKAEDAELEGYETLIVDPPRKGLKEFSRRIVKKGPNTLIYVSCNPLRFILDYRNYLSEAYKVDDALLIDMFPHTPHIEAVIKLVRR.

Residues C63, C69, C72, and C139 each coordinate [4Fe-4S] cluster. Q255, Y281, E302, and D343 together coordinate S-adenosyl-L-methionine. Residue C369 is the Nucleophile of the active site.

Belongs to the class I-like SAM-binding methyltransferase superfamily. RNA M5U methyltransferase family.

It catalyses the reaction uridine(747) in 23S rRNA + S-adenosyl-L-methionine = 5-methyluridine(747) in 23S rRNA + S-adenosyl-L-homocysteine + H(+). Its function is as follows. Catalyzes the formation of 5-methyl-uridine at position equivalent to 747 (m5U747) in 23S rRNA. In Pyrococcus horikoshii (strain ATCC 700860 / DSM 12428 / JCM 9974 / NBRC 100139 / OT-3), this protein is 23S rRNA (uracil(747)-C(5))-methyltransferase.